Consider the following 124-residue polypeptide: ATP synthase epsilon chain (124 aa).

It belongs to the ATPase epsilon chain family. In terms of assembly, F-type ATPases have 2 components, CF(1) - the catalytic core - and CF(0) - the membrane proton channel. CF(1) has five subunits: alpha(3), beta(3), gamma(1), delta(1), epsilon(1). CF(0) has three main subunits: a, b and c.

The protein localises to the cell membrane. In terms of biological role, produces ATP from ADP in the presence of a proton gradient across the membrane. The protein is ATP synthase epsilon chain of Streptomyces griseus subsp. griseus (strain JCM 4626 / CBS 651.72 / NBRC 13350 / KCC S-0626 / ISP 5235).